The following is a 310-amino-acid chain: Probable cell division protein WhiA (310 aa).

A DNA-binding region (H-T-H motif) is located at residues 277 to 310 (SLKELAEQVPDGPISKSGVNHRLKKLHEIAENLR).

Belongs to the WhiA family.

Involved in cell division and chromosome segregation. In Lactobacillus delbrueckii subsp. bulgaricus (strain ATCC BAA-365 / Lb-18), this protein is Probable cell division protein WhiA.